Consider the following 273-residue polypeptide: Vacuolar membrane protein YPL162C (273 aa).

The Vacuolar portion of the chain corresponds to 1 to 13 (MYVSNGKDTCQLL). Residues 14-34 (GPVSLFVQTLMGMTAVIVLLV) traverse the membrane as a helical segment. Topologically, residues 35–51 (KRNYEHPRRKMIVWSYD) are cytoplasmic. Residues 52–72 (IGKQIIGSLGIHFLNLGISIL) form a helical membrane-spanning segment. The Vacuolar portion of the chain corresponds to 73–97 (KKRRRSLFAITAKGNDDEDQCDWYF). Residues 98-118 (LNLLLDTTVGIPILWLCLYII) form a helical membrane-spanning segment. Topologically, residues 119–156 (EKVLKSLHFQNIESGNYFPSKTVGSHPRKPLFSAFVKQ) are cytoplasmic. Residues 157 to 177 (LLIFIVGLGVMKFCVFLILNY) form a helical membrane-spanning segment. The Vacuolar portion of the chain corresponds to 178-198 (LEDLAYWFADLILGWSDSWPN). Residues 199–219 (FQVFLVMFVFPILLNCFQYFC) traverse the membrane as a helical segment. The Cytoplasmic segment spans residues 220–273 (VDNVIRLHSESLTITNAENFETNTFLNDEIPDLSEVSNEVPNKDNNISSYGSII).

It is found in the vacuole membrane. This chain is Vacuolar membrane protein YPL162C, found in Saccharomyces cerevisiae (strain ATCC 204508 / S288c) (Baker's yeast).